The primary structure comprises 330 residues: MTGDAPQSAPQHRGSPAPAHVPVMLERVVELLAPALQQPGAIAVDGTLGLGGHAEALLRAHPGLRLVGVDRDTTALERARQRLAPYADRIDLVHAVYSDIPRILDELGIDRVHGLLFDLGVSSPQLDEAERGFAYSYDAPLDMRMDRTQERTAADIVNTYPASELTRIFRVYGEERFAARIAQAIVRQRAKEPVRTTGVLADLVRSAIPAAARRSGGHPAKRAFQALRIEVNSELSILERALPAALSRLAVAGRIVVLSYHSLEDRITKRVLTELSTDSTPPGLPVPLPDRQPELRLLTRGAELPTEQETAANPRAASARLRAAERTREP.

S-adenosyl-L-methionine contacts are provided by residues 51–53 (GGH), Asp70, Asp118, and Gln125. The tract at residues 276-330 (STDSTPPGLPVPLPDRQPELRLLTRGAELPTEQETAANPRAASARLRAAERTREP) is disordered. Residues 311–321 (AANPRAASARL) are compositionally biased toward low complexity.

This sequence belongs to the methyltransferase superfamily. RsmH family.

The protein localises to the cytoplasm. It catalyses the reaction cytidine(1402) in 16S rRNA + S-adenosyl-L-methionine = N(4)-methylcytidine(1402) in 16S rRNA + S-adenosyl-L-homocysteine + H(+). In terms of biological role, specifically methylates the N4 position of cytidine in position 1402 (C1402) of 16S rRNA. This is Ribosomal RNA small subunit methyltransferase H from Thermobifida fusca (strain YX).